The following is an 815-amino-acid chain: MPRYEPQEIESKWQKFWEKEGLFKTPQHSDLPKYYMLVMFPYPSGTLHVGHVKNYVIGDAVARYKRMRAYNVLHPFGYDAFGLPAENAAIERKIHPKDWTLNNINIIRRQIKKLGISYDWNREVITCLESYYKWTEWIFLKLYEAGLAYKKKAAVNWCPKCMTSLANEQVKDGRCERCDTPVTIKHLEQWFFKITDYAERLLKDLDKLTGWPEHVKTMQRNWIGESKGAKISFKVEESEMNIEVFTTRPDTLWGVTFMVLAPESDLVNHITLPELKGELEKFLNYVGQQDRHKRGSADVEKEGFFTGRYAINPVSGERIPIYVANYVLMEYGTGAVMGVPAHDQRDYEFAVKYNLPIKEVIKPSEDIPKNRAYDGPGIMVNSGPLNGTVVPEGIERVIQWLEERGIAKRSVQYKLRDWLISRQRYWGAPIPIVYCEKCGMVPVPEKSLPVQLPYDVEFLPTGQSPLMLNDEFRKTSCPKCGGPALRDADTMDTFVDSSWYFLRYVNPDRDDVPFVKEDVDHWLPVDQYVGGVEHAVLHLLYSRFITKVLYDLGYLSFDEPFENLFTQGMIYKDGAKMSKSKGNVVSPDEMIDRYGADTLRMYILFMGPPERDAEWNDAGIEGVYRFIRRAWSLMDQIISLPDNQNQVFAEEEKHLRRKLHISLRKVTQDMEGGFKFNTVVSSLMELVNDAYDYIDNLPQHRWNIKLLKELAKNFVLMISPFAPHFAEELWQRMGYSSSVMKEKWPEYDPDALVVEEVEIAIQVNGKLRDKVKIPVDATEDQIKEIALKSEKVRKYISDEPKKIIYVPKRLLNIIF.

Positions 41–51 (PYPSGTLHVGH) match the 'HIGH' region motif. The short motif at 576–580 (KMSKS) is the 'KMSKS' region element. Lysine 579 contacts ATP.

The protein belongs to the class-I aminoacyl-tRNA synthetase family.

The protein localises to the cytoplasm. It catalyses the reaction tRNA(Leu) + L-leucine + ATP = L-leucyl-tRNA(Leu) + AMP + diphosphate. The chain is Leucine--tRNA ligase from Pseudothermotoga lettingae (strain ATCC BAA-301 / DSM 14385 / NBRC 107922 / TMO) (Thermotoga lettingae).